Here is a 115-residue protein sequence, read N- to C-terminus: Large ribosomal subunit protein bL19 (115 aa).

It belongs to the bacterial ribosomal protein bL19 family.

Functionally, this protein is located at the 30S-50S ribosomal subunit interface and may play a role in the structure and function of the aminoacyl-tRNA binding site. This is Large ribosomal subunit protein bL19 from Latilactobacillus sakei subsp. sakei (strain 23K) (Lactobacillus sakei subsp. sakei).